Consider the following 236-residue polypeptide: Coat protein (236 aa).

The tract at residues 1-27 (MTTPANTTQAVGSTTSTTTTTAGATPA) is disordered. The span at 7–27 (TTQAVGSTTSTTTTTAGATPA) shows a compositional bias: low complexity.

The protein belongs to the potexvirus capsid protein family.

It is found in the virion. Functionally, required for genome encapsidation. Forms ribonucleoprotein complexes along with TGB1 helicase and viral RNA. This chain is Coat protein, found in Brassica campestris (Field mustard).